A 435-amino-acid polypeptide reads, in one-letter code: GTPase Obg (435 aa).

Residues 1–159 (MAFIDKCKIV…IEVVLELKTI (159 aa)) form the Obg domain. The OBG-type G domain maps to 160 to 329 (ADIGIIGLPN…MLDDVIKIYF (170 aa)). GTP-binding positions include 166–173 (GLPNAGKS), 191–195 (FTTLN), 212–215 (DIPG), 282–285 (NKID), and 310–312 (SAL). Residues S173 and T193 each coordinate Mg(2+). Residues 355–435 (TPKNKELDKT…IYDITLEFEE (81 aa)) enclose the OCT domain.

Belongs to the TRAFAC class OBG-HflX-like GTPase superfamily. OBG GTPase family. As to quaternary structure, monomer. The cofactor is Mg(2+).

The protein resides in the cytoplasm. Functionally, an essential GTPase which binds GTP, GDP and possibly (p)ppGpp with moderate affinity, with high nucleotide exchange rates and a fairly low GTP hydrolysis rate. Plays a role in control of the cell cycle, stress response, ribosome biogenesis and in those bacteria that undergo differentiation, in morphogenesis control. This Ureaplasma urealyticum serovar 10 (strain ATCC 33699 / Western) protein is GTPase Obg.